The following is a 335-amino-acid chain: Heme A synthase (335 aa).

8 consecutive transmembrane segments (helical) span residues Val-9–Phe-29, Tyr-90–Phe-110, Val-120–Tyr-140, Met-156–Phe-176, Val-197–Leu-217, Val-255–Ile-275, Val-283–Leu-303, and Ile-309–Cys-329. His-259 contributes to the heme binding site. Heme is bound at residue His-313.

It belongs to the COX15/CtaA family. Type 2 subfamily. As to quaternary structure, interacts with CtaB. It depends on heme b as a cofactor.

The protein resides in the cell membrane. It carries out the reaction Fe(II)-heme o + 2 A + H2O = Fe(II)-heme a + 2 AH2. Its pathway is porphyrin-containing compound metabolism; heme A biosynthesis; heme A from heme O: step 1/1. Functionally, catalyzes the conversion of heme O to heme A by two successive hydroxylations of the methyl group at C8. The first hydroxylation forms heme I, the second hydroxylation results in an unstable dihydroxymethyl group, which spontaneously dehydrates, resulting in the formyl group of heme A. The protein is Heme A synthase of Wolbachia sp. subsp. Brugia malayi (strain TRS).